Consider the following 96-residue polypeptide: MPQPQQLPGPNADIWDWQMRGLCRGVDSSMFFHPDGERGRARAQREMRAKEMCRSCPVIAQCRSHALAVGEPYGIWGGLSESERELLLKRGIRRSA.

Residues 22-86 (LCRGVDSSMF…GGLSESEREL (65 aa)) enclose the 4Fe-4S Wbl-type domain. [4Fe-4S] cluster-binding residues include Cys-23, Cys-53, Cys-56, and Cys-62.

The protein belongs to the WhiB family. The cofactor is [4Fe-4S] cluster. Post-translationally, the Fe-S cluster can be nitrosylated by nitric oxide (NO). In terms of processing, upon Fe-S cluster removal intramolecular disulfide bonds are formed.

It localises to the cytoplasm. Functionally, a redox-sensitive transcriptional regulator. Maintains intracellular redox homeostasis by regulating catabolic metabolism and polyketide biosynthesis. Regulates expression of the redox buffer ergothioneine (ERG). In concert with myothiol (MSH), another redox buffer, responds to low pH leading to acid resistance. The apo- but not holo-form probably binds DNA. This Mycolicibacterium smegmatis (strain ATCC 700084 / mc(2)155) (Mycobacterium smegmatis) protein is Redox-responsive transcriptional regulator WhiB3 (whiB3).